The chain runs to 124 residues: Holo-[acyl-carrier-protein] synthase (124 aa).

Positions 8 and 56 each coordinate Mg(2+).

This sequence belongs to the P-Pant transferase superfamily. AcpS family. Mg(2+) is required as a cofactor.

It localises to the cytoplasm. It carries out the reaction apo-[ACP] + CoA = holo-[ACP] + adenosine 3',5'-bisphosphate + H(+). In terms of biological role, transfers the 4'-phosphopantetheine moiety from coenzyme A to a Ser of acyl-carrier-protein. The chain is Holo-[acyl-carrier-protein] synthase from Nitratidesulfovibrio vulgaris (strain ATCC 29579 / DSM 644 / CCUG 34227 / NCIMB 8303 / VKM B-1760 / Hildenborough) (Desulfovibrio vulgaris).